The following is a 199-amino-acid chain: MQESKYQELQKQAEKSVKESMTLFQDWPNKGVGFQDISNLFLCYDKFSDVLDYYEHRFSDVDLVVGLEARGFILGTAFAQRMKLPMMMIRKKGKLPGPCFRESYKKEYGTDEFEVQEKALSKVVVKPSKKYHVLIMDDILAPGGTMAASIELTKKVLINNGIKDFKISTSLISSIKVLNGKEKIYEKYNDVSVDIIIEM.

Belongs to the purine/pyrimidine phosphoribosyltransferase family. As to quaternary structure, homodimer.

It is found in the cytoplasm. It catalyses the reaction AMP + diphosphate = 5-phospho-alpha-D-ribose 1-diphosphate + adenine. Its pathway is purine metabolism; AMP biosynthesis via salvage pathway; AMP from adenine: step 1/1. Its function is as follows. Catalyzes a salvage reaction resulting in the formation of AMP, that is energically less costly than de novo synthesis. The sequence is that of Probable adenine phosphoribosyltransferase (aprt) from Dictyostelium discoideum (Social amoeba).